The following is a 235-amino-acid chain: Pyridoxine 5'-phosphate synthase (235 aa).

Asparagine 6 is a binding site for 3-amino-2-oxopropyl phosphate. 8-9 (DH) contributes to the 1-deoxy-D-xylulose 5-phosphate binding site. Arginine 17 is a binding site for 3-amino-2-oxopropyl phosphate. Histidine 42 (proton acceptor) is an active-site residue. 2 residues coordinate 1-deoxy-D-xylulose 5-phosphate: arginine 44 and histidine 49. The Proton acceptor role is filled by glutamate 69. Threonine 99 is a binding site for 1-deoxy-D-xylulose 5-phosphate. The active-site Proton donor is the histidine 189. 3-amino-2-oxopropyl phosphate contacts are provided by residues glycine 190 and 211–212 (GH).

The protein belongs to the PNP synthase family. As to quaternary structure, homooctamer; tetramer of dimers.

It is found in the cytoplasm. The enzyme catalyses 3-amino-2-oxopropyl phosphate + 1-deoxy-D-xylulose 5-phosphate = pyridoxine 5'-phosphate + phosphate + 2 H2O + H(+). It functions in the pathway cofactor biosynthesis; pyridoxine 5'-phosphate biosynthesis; pyridoxine 5'-phosphate from D-erythrose 4-phosphate: step 5/5. Catalyzes the complicated ring closure reaction between the two acyclic compounds 1-deoxy-D-xylulose-5-phosphate (DXP) and 3-amino-2-oxopropyl phosphate (1-amino-acetone-3-phosphate or AAP) to form pyridoxine 5'-phosphate (PNP) and inorganic phosphate. The sequence is that of Pyridoxine 5'-phosphate synthase from Chlorobium luteolum (strain DSM 273 / BCRC 81028 / 2530) (Pelodictyon luteolum).